Here is a 136-residue protein sequence, read N- to C-terminus: Urease subunit beta (136 aa).

The interval 113 to 136 is disordered; it reads NDEYAGVFGDNGAENVNKKGGKRS.

The protein belongs to the urease beta subunit family. As to quaternary structure, heterotrimer of UreA (gamma), UreB (beta) and UreC (alpha) subunits. Three heterotrimers associate to form the active enzyme.

The protein resides in the cytoplasm. The catalysed reaction is urea + 2 H2O + H(+) = hydrogencarbonate + 2 NH4(+). It participates in nitrogen metabolism; urea degradation; CO(2) and NH(3) from urea (urease route): step 1/1. The chain is Urease subunit beta from Staphylococcus aureus (strain USA300).